Consider the following 217-residue polypeptide: Cytidylate kinase (217 aa).

9 to 17 contributes to the ATP binding site; sequence GPAASGKSS.

Belongs to the cytidylate kinase family. Type 1 subfamily.

Its subcellular location is the cytoplasm. It carries out the reaction CMP + ATP = CDP + ADP. It catalyses the reaction dCMP + ATP = dCDP + ADP. The polypeptide is Cytidylate kinase (Bdellovibrio bacteriovorus (strain ATCC 15356 / DSM 50701 / NCIMB 9529 / HD100)).